The chain runs to 334 residues: Phospho-N-acetylmuramoyl-pentapeptide-transferase (334 aa).

10 helical membrane-spanning segments follow: residues 11 to 31 (GAGL…IPLM), 55 to 75 (PTMG…IFAP), 84 to 104 (LIIA…DDYI), 124 to 144 (VGLA…GTAV), 158 to 178 (PLYY…VNFA), 184 to 204 (LLGG…ALAL), 205 to 225 (GQTD…GFLH), 233 to 253 (IFMG…LAVL), 258 to 278 (FLLV…ILQV), and 311 to 331 (LFWG…PGML).

Belongs to the glycosyltransferase 4 family. MraY subfamily. It depends on Mg(2+) as a cofactor.

It is found in the cell membrane. It catalyses the reaction UDP-N-acetyl-alpha-D-muramoyl-L-alanyl-gamma-D-glutamyl-meso-2,6-diaminopimeloyl-D-alanyl-D-alanine + di-trans,octa-cis-undecaprenyl phosphate = di-trans,octa-cis-undecaprenyl diphospho-N-acetyl-alpha-D-muramoyl-L-alanyl-D-glutamyl-meso-2,6-diaminopimeloyl-D-alanyl-D-alanine + UMP. Its pathway is cell wall biogenesis; peptidoglycan biosynthesis. In terms of biological role, catalyzes the initial step of the lipid cycle reactions in the biosynthesis of the cell wall peptidoglycan: transfers peptidoglycan precursor phospho-MurNAc-pentapeptide from UDP-MurNAc-pentapeptide onto the lipid carrier undecaprenyl phosphate, yielding undecaprenyl-pyrophosphoryl-MurNAc-pentapeptide, known as lipid I. The sequence is that of Phospho-N-acetylmuramoyl-pentapeptide-transferase from Symbiobacterium thermophilum (strain DSM 24528 / JCM 14929 / IAM 14863 / T).